The primary structure comprises 183 residues: Translation initiation factor IF-3 (183 aa).

This sequence belongs to the IF-3 family. In terms of assembly, monomer.

The protein resides in the cytoplasm. IF-3 binds to the 30S ribosomal subunit and shifts the equilibrium between 70S ribosomes and their 50S and 30S subunits in favor of the free subunits, thus enhancing the availability of 30S subunits on which protein synthesis initiation begins. The chain is Translation initiation factor IF-3 from Yersinia pseudotuberculosis serotype O:1b (strain IP 31758).